Reading from the N-terminus, the 257-residue chain is Probable septum site-determining protein MinC (257 aa).

This sequence belongs to the MinC family. Interacts with MinD and FtsZ.

Functionally, cell division inhibitor that blocks the formation of polar Z ring septums. Rapidly oscillates between the poles of the cell to destabilize FtsZ filaments that have formed before they mature into polar Z rings. Prevents FtsZ polymerization. This chain is Probable septum site-determining protein MinC, found in Burkholderia lata (strain ATCC 17760 / DSM 23089 / LMG 22485 / NCIMB 9086 / R18194 / 383).